A 316-amino-acid polypeptide reads, in one-letter code: Ribosomal RNA small subunit methyltransferase H (316 aa).

S-adenosyl-L-methionine contacts are provided by residues 35–37 (GGH), aspartate 55, phenylalanine 79, aspartate 101, and glutamine 108.

This sequence belongs to the methyltransferase superfamily. RsmH family.

The protein resides in the cytoplasm. The catalysed reaction is cytidine(1402) in 16S rRNA + S-adenosyl-L-methionine = N(4)-methylcytidine(1402) in 16S rRNA + S-adenosyl-L-homocysteine + H(+). Its function is as follows. Specifically methylates the N4 position of cytidine in position 1402 (C1402) of 16S rRNA. The polypeptide is Ribosomal RNA small subunit methyltransferase H (Vibrio campbellii (strain ATCC BAA-1116)).